We begin with the raw amino-acid sequence, 700 residues long: Elongation factor G (700 aa).

The region spanning 10-285 (DRTRNIGIMA…AVIDYLPSPL (276 aa)) is the tr-type G domain. GTP-binding positions include 19–26 (AHIDAGKT), 83–87 (DTPGH), and 137–140 (NKMD).

It belongs to the TRAFAC class translation factor GTPase superfamily. Classic translation factor GTPase family. EF-G/EF-2 subfamily.

The protein resides in the cytoplasm. Functionally, catalyzes the GTP-dependent ribosomal translocation step during translation elongation. During this step, the ribosome changes from the pre-translocational (PRE) to the post-translocational (POST) state as the newly formed A-site-bound peptidyl-tRNA and P-site-bound deacylated tRNA move to the P and E sites, respectively. Catalyzes the coordinated movement of the two tRNA molecules, the mRNA and conformational changes in the ribosome. The polypeptide is Elongation factor G (Lacticaseibacillus paracasei (strain ATCC 334 / BCRC 17002 / CCUG 31169 / CIP 107868 / KCTC 3260 / NRRL B-441) (Lactobacillus paracasei)).